The sequence spans 264 residues: S-adenosylmethionine decarboxylase proenzyme (264 aa).

The active-site Schiff-base intermediate with substrate; via pyruvic acid is Ser113. Ser113 carries the pyruvic acid (Ser); by autocatalysis modification. The Proton acceptor; for processing activity role is filled by His118. Residue Cys141 is the Proton donor; for catalytic activity of the active site.

The protein belongs to the prokaryotic AdoMetDC family. Type 2 subfamily. Heterooctamer of four alpha and four beta chains arranged as a tetramer of alpha/beta heterodimers. Pyruvate serves as cofactor. Post-translationally, is synthesized initially as an inactive proenzyme. Formation of the active enzyme involves a self-maturation process in which the active site pyruvoyl group is generated from an internal serine residue via an autocatalytic post-translational modification. Two non-identical subunits are generated from the proenzyme in this reaction, and the pyruvate is formed at the N-terminus of the alpha chain, which is derived from the carboxyl end of the proenzyme. The post-translation cleavage follows an unusual pathway, termed non-hydrolytic serinolysis, in which the side chain hydroxyl group of the serine supplies its oxygen atom to form the C-terminus of the beta chain, while the remainder of the serine residue undergoes an oxidative deamination to produce ammonia and the pyruvoyl group blocking the N-terminus of the alpha chain.

It carries out the reaction S-adenosyl-L-methionine + H(+) = S-adenosyl 3-(methylsulfanyl)propylamine + CO2. The protein operates within amine and polyamine biosynthesis; S-adenosylmethioninamine biosynthesis; S-adenosylmethioninamine from S-adenosyl-L-methionine: step 1/1. Functionally, catalyzes the decarboxylation of S-adenosylmethionine to S-adenosylmethioninamine (dcAdoMet), the propylamine donor required for the synthesis of the polyamines spermine and spermidine from the diamine putrescine. The sequence is that of S-adenosylmethionine decarboxylase proenzyme from Pseudomonas paraeruginosa (strain DSM 24068 / PA7) (Pseudomonas aeruginosa (strain PA7)).